The sequence spans 281 residues: Pantothenate synthetase (281 aa).

30–37 (MGNLHLGH) lines the ATP pocket. The Proton donor role is filled by H37. Residue Q61 coordinates (R)-pantoate. Q61 contributes to the beta-alanine binding site. ATP is bound at residue 149 to 152 (GRKD). Residue Q155 coordinates (R)-pantoate. Residues I178 and 186–189 (MSSR) contribute to the ATP site.

This sequence belongs to the pantothenate synthetase family. In terms of assembly, homodimer.

It localises to the cytoplasm. It catalyses the reaction (R)-pantoate + beta-alanine + ATP = (R)-pantothenate + AMP + diphosphate + H(+). It participates in cofactor biosynthesis; (R)-pantothenate biosynthesis; (R)-pantothenate from (R)-pantoate and beta-alanine: step 1/1. Functionally, catalyzes the condensation of pantoate with beta-alanine in an ATP-dependent reaction via a pantoyl-adenylate intermediate. This Shewanella woodyi (strain ATCC 51908 / MS32) protein is Pantothenate synthetase.